Consider the following 203-residue polypeptide: Large ribosomal subunit protein uL13 (203 aa).

N-acetylalanine is present on Ala2. Position 59 is a citrulline (Arg59). Position 77 is a phosphoserine (Ser77). Position 140 is a citrulline (Arg140). Lys191 carries the N6-acetyllysine modification.

The protein belongs to the universal ribosomal protein uL13 family. In terms of assembly, component of the 60S ribosome. Component of the GAIT complex. Interacts with EIF4G1. Phosphorylation at Ser-77 upon interferon-gamma treatment in monocytes involves a DAPK1-DAPK3 kinase cascade and is causing release from the ribosome, association with the GAIT complex and subsequent involvement in transcript-selective translation inhibition. Post-translationally, citrullinated by PADI4.

The protein resides in the cytoplasm. Its function is as follows. Associated with ribosomes but is not required for canonical ribosome function and has extra-ribosomal functions. Component of the GAIT (gamma interferon-activated inhibitor of translation) complex which mediates interferon-gamma-induced transcript-selective translation inhibition in inflammation processes. Upon interferon-gamma activation and subsequent phosphorylation dissociates from the ribosome and assembles into the GAIT complex which binds to stem loop-containing GAIT elements in the 3'-UTR of diverse inflammatory mRNAs (such as ceruplasmin) and suppresses their translation. In the GAIT complex interacts with m7G cap-bound eIF4G at or near the eIF3-binding site and blocks the recruitment of the 43S ribosomal complex. Involved in methylation of rRNA. The sequence is that of Large ribosomal subunit protein uL13 (RPL13A) from Oryctolagus cuniculus (Rabbit).